Consider the following 778-residue polypeptide: Dapper homolog 1 (778 aa).

Composition is skewed to basic and acidic residues over residues 1-10 (MKPDAAREPE) and 18-40 (AEAE…TRER). The disordered stretch occupies residues 1–40 (MKPDAAREPEPLSPGRGAEAEGRWRERGEADTERQRTRER). The required for self-association stretch occupies residues 85 to 149 (DAAQRSRLEE…SEEHLETDSR (65 aa)). Residues 85–149 (DAAQRSRLEE…SEEHLETDSR (65 aa)) adopt a coiled-coil conformation. The Nuclear export signal motif lies at 125–134 (LDKQISDLRL). Disordered regions lie at residues 305-324 (KTHP…DPTK), 359-386 (GGIT…QLES), 397-416 (AGAA…KAAS), 428-468 (ESMK…SQKN), 544-616 (EKPR…HKRT), and 694-721 (NCFG…SEES). The segment covering 375–386 (RSKDSKTDQLES) has biased composition (basic and acidic residues). Polar residues predominate over residues 432 to 443 (ESNQASAVSPKT). The Bipartite nuclear localization signal signature appears at 551 to 564 (KKCRFPDDSDTNKK). Over residues 554–563 (RFPDDSDTNK) the composition is skewed to basic and acidic residues. The segment covering 564–574 (KFRKTSAKGRR) has biased composition (basic residues). Positions 694–704 (NCFGDSESSVS) are enriched in polar residues. Positions 768–778 (RSGSLKLMTTV) match the PDZ-binding motif. Phosphoserine; by PKA is present on serine 769.

This sequence belongs to the dapper family. As to quaternary structure, can form homodimers and heterodimers with DACT2 or DACT3. Interacts with CSNK1D, PKA catalytic subunit, PKC-type kinase, CSNK2A1, CSNK2B, DVL1, DLV2, DVAL3, VANGL1, VANGL2, CTNND1 and HDAC1. Interacts with GSK3B; the interaction is indicative for an association of DACT1 with the beta-catenin destruction complex. Interacts with GSK3A. Interacts with YWHAB; the interaction is enhanced by PKA phosphorylating DACT1 at Ser-769. Interacts with CTNNB1. As to expression, expressed in multiple tissues including brain, heart, kidney, liver and testis.

It localises to the cytoplasm. It is found in the nucleus. The protein localises to the synapse. Its function is as follows. Involved in regulation of intracellular signaling pathways during development. Specifically thought to play a role in canonical and/or non-canonical Wnt signaling pathways through interaction with DSH (Dishevelled) family proteins. The activation/inhibition of Wnt signaling may depend on the phosphorylation status. Proposed to regulate the degradation of CTNNB1/beta-catenin, thereby modulating the transcriptional activation of target genes of the Wnt signaling pathway. Its function in stabilizing CTNNB1 may involve inhibition of GSK3B activity. Promotes the membrane localization of CTNNB1. The cytoplasmic form can induce DVL2 degradation via a lysosome-dependent mechanism; the function is inhibited by PKA-induced binding to 14-3-3 proteins, such as YWHAB. Seems to be involved in morphogenesis at the primitive streak by regulating VANGL2 and DVL2; the function seems to be independent of canonical Wnt signaling and rather involves the non-canonical Wnt/planar cell polarity (PCP) pathway. The nuclear form may prevent the formation of LEF1:CTNNB1 complex and recruit HDAC1 to LEF1 at target gene promoters to repress transcription thus antagonizing Wnt signaling. May be involved in positive regulation of fat cell differentiation. During neuronal differentiation may be involved in excitatory synapse organization, and dendrite formation and establishment of spines. This Mus musculus (Mouse) protein is Dapper homolog 1 (Dact1).